Consider the following 428-residue polypeptide: C4-dicarboxylate transport protein (428 aa).

8 consecutive transmembrane segments (helical) span residues 8-28 (SLYFQVLTAIAIGILLGHFYP), 44-64 (LIKMIIAPVIFCTVVTGIAGM), 76-96 (VALLYFEIVSTIALIIGLIIV), 142-162 (IGAFASGNILQVLLFAVLFGF), 184-204 (VIFGIINMIMRLAPIGAFGAM), 222-242 (LIICFYITCILFVVLVLGSIA), 326-346 (IVHQITLLIVLLLSSKGAAGV), and 352-372 (IVLAATLSAVGHLPVAGLALI).

Belongs to the dicarboxylate/amino acid:cation symporter (DAACS) (TC 2.A.23) family.

It is found in the cell inner membrane. In terms of biological role, responsible for the transport of dicarboxylates such as succinate, fumarate, and malate from the periplasm across the membrane. The chain is C4-dicarboxylate transport protein from Escherichia coli O139:H28 (strain E24377A / ETEC).